A 238-amino-acid chain; its full sequence is Photosynthetic NDH subunit of lumenal location 1, chloroplastic (238 aa).

It belongs to the PsbP family. As to quaternary structure, part of the chloroplast NDH complex, composed of a mixture of chloroplast and nucleus encoded subunits. Component of the NDH lumenal subcomplex, at least composed of PnsL1, PnsL2, PnsL3, PnsL4 and PnsL5.

It localises to the plastid. It is found in the chloroplast thylakoid membrane. Its function is as follows. NDH shuttles electrons from NAD(P)H:plastoquinone, via FMN and iron-sulfur (Fe-S) centers, to quinones in the photosynthetic chain and possibly in a chloroplast respiratory chain. The immediate electron acceptor for the enzyme in this species is believed to be plastoquinone. Couples the redox reaction to proton translocation, and thus conserves the redox energy in a proton gradient. Required for accumulation of the chloroplast NAD(P)H dehydrogenase (NDH) complex. The protein is Photosynthetic NDH subunit of lumenal location 1, chloroplastic of Arabidopsis thaliana (Mouse-ear cress).